A 24-amino-acid polypeptide reads, in one-letter code: Citropin-3.1.2 (24 aa).

In terms of tissue distribution, expressed by the dorsal and submental skin glands.

The protein localises to the secreted. The polypeptide is Citropin-3.1.2 (Ranoidea citropa (Australian Blue Mountains tree frog)).